Consider the following 245-residue polypeptide: Probable phosphatase YpAngola_A2446 (245 aa).

Residues histidine 7, histidine 9, histidine 15, histidine 40, glutamate 73, histidine 101, histidine 131, aspartate 192, and histidine 194 each coordinate Zn(2+).

It belongs to the PHP family. As to quaternary structure, homotrimer. Zn(2+) serves as cofactor.

The sequence is that of Probable phosphatase YpAngola_A2446 from Yersinia pestis bv. Antiqua (strain Angola).